The primary structure comprises 723 residues: Translation initiation factor IF-2 (723 aa).

The disordered stretch occupies residues 112–138 (KIFNNKKNKKQKPQQAPQQEVQKKKEK). Residues 114-123 (FNNKKNKKQK) show a composition bias toward basic residues. The tr-type G domain occupies 224-393 (ERPPVVTIMG…LLVSEMEELK (170 aa)). Residues 233-240 (GHVDHGKT) form a G1 region. 233 to 240 (GHVDHGKT) provides a ligand contact to GTP. The segment at 258–262 (GITQH) is G2. Positions 279 to 282 (DTPG) are G3. GTP-binding positions include 279–283 (DTPGH) and 333–336 (NKID). Positions 333 to 336 (NKID) are G4. Residues 369-371 (SAL) are G5.

The protein belongs to the TRAFAC class translation factor GTPase superfamily. Classic translation factor GTPase family. IF-2 subfamily.

It localises to the cytoplasm. Functionally, one of the essential components for the initiation of protein synthesis. Protects formylmethionyl-tRNA from spontaneous hydrolysis and promotes its binding to the 30S ribosomal subunits. Also involved in the hydrolysis of GTP during the formation of the 70S ribosomal complex. The polypeptide is Translation initiation factor IF-2 (Anoxybacillus flavithermus (strain DSM 21510 / WK1)).